The primary structure comprises 335 residues: Ig gamma-2A chain C region secreted form (335 aa).

3 consecutive Ig-like domains span residues 6 to 98 (PSVY…KKIE), 126 to 225 (PSVF…KTIS), and 234 to 330 (PQVY…KTIS). Asn185 carries N-linked (GlcNAc...) asparagine glycosylation.

It localises to the secreted. The protein is Ig gamma-2A chain C region secreted form of Mus musculus (Mouse).